The sequence spans 785 residues: Protein translocase subunit SecA 3 (785 aa).

Residues glutamine 98, 116 to 120 (GEGKT), and aspartate 505 each bind ATP.

It belongs to the SecA family. In terms of assembly, monomer and homodimer. Part of the essential Sec protein translocation apparatus which comprises SecA, SecYEG and auxiliary proteins SecDF. Other proteins may also be involved.

It localises to the cell membrane. The protein resides in the cytoplasm. The enzyme catalyses ATP + H2O + cellular proteinSide 1 = ADP + phosphate + cellular proteinSide 2.. In terms of biological role, part of the Sec protein translocase complex. Interacts with the SecYEG preprotein conducting channel. Has a central role in coupling the hydrolysis of ATP to the transfer of proteins into and across the cell membrane, serving as an ATP-driven molecular motor driving the stepwise translocation of polypeptide chains across the membrane. In Mycolicibacterium vanbaalenii (strain DSM 7251 / JCM 13017 / BCRC 16820 / KCTC 9966 / NRRL B-24157 / PYR-1) (Mycobacterium vanbaalenii), this protein is Protein translocase subunit SecA 3.